A 311-amino-acid polypeptide reads, in one-letter code: MANPLYQKHIISINDLSRDDLNLVLATAAKLKANPQPELLKHKVIASCFFEASTRTRLSFETSMHRLGASVVGFSDSANTSLGKKGETLADTISVISTYVDAIVMRHPQEGAARLATEFSGQVPVLNAGDGSNQHPTQTLLDLFTIQETQGRLDNLHIAMVGDLKYGRTVHSLTQALAKFSGNRFYFIAPDALAMPQYILDMLDEKGMAWSLHGSIEEVMADVDILYMTRVQKERLDPSEYANVKAQFVLRASDLNGARENMKVLHPLPRIDEITTDVDKTPHAWYFQQAGNGIFARQALLALVLNSELSL.

Carbamoyl phosphate is bound by residues R55 and T56. K85 serves as a coordination point for L-aspartate. Positions 106, 135, and 138 each coordinate carbamoyl phosphate. 2 residues coordinate L-aspartate: R168 and R230. Positions 268 and 269 each coordinate carbamoyl phosphate.

It belongs to the aspartate/ornithine carbamoyltransferase superfamily. ATCase family. Heterododecamer (2C3:3R2) of six catalytic PyrB chains organized as two trimers (C3), and six regulatory PyrI chains organized as three dimers (R2).

It catalyses the reaction carbamoyl phosphate + L-aspartate = N-carbamoyl-L-aspartate + phosphate + H(+). The protein operates within pyrimidine metabolism; UMP biosynthesis via de novo pathway; (S)-dihydroorotate from bicarbonate: step 2/3. Its function is as follows. Catalyzes the condensation of carbamoyl phosphate and aspartate to form carbamoyl aspartate and inorganic phosphate, the committed step in the de novo pyrimidine nucleotide biosynthesis pathway. This is Aspartate carbamoyltransferase catalytic subunit from Salmonella paratyphi A (strain AKU_12601).